A 686-amino-acid polypeptide reads, in one-letter code: Ovotransferrin (686 aa).

2 consecutive Transferrin-like domains span residues 7 to 333 (VRWC…SLRK) and 345 to 670 (IQWC…SLNT). Intrachain disulfides connect Cys-10–Cys-45, Cys-20–Cys-36, Cys-115–Cys-197, Cys-160–Cys-174, Cys-171–Cys-182, and Cys-228–Cys-242. The tract at residues 333 to 341 (KDQLTVGPR) is connecting region. Intrachain disulfides connect Cys-348/Cys-380, Cys-358/Cys-371, Cys-405/Cys-680, Cys-421/Cys-643, Cys-454/Cys-530, Cys-478/Cys-671, Cys-488/Cys-502, Cys-499/Cys-513, and Cys-570/Cys-584. Asn-473 is a glycosylation site (N-linked (GlcNAc...) asparagine). Asn-548 carries an N-linked (GlcNAc...) asparagine glycan.

Belongs to the transferrin family. As to quaternary structure, monomer.

It localises to the secreted. Transferrins are iron binding transport proteins which can bind two Fe(3+) ions in association with the binding of an anion, usually bicarbonate. It is responsible for the transport of iron from sites of absorption and heme degradation to those of storage and utilization. Serum transferrin may also have a further role in stimulating cell proliferation. Functionally, ovotransferrin has a bacteriostatic function. Its concentration in avian egg is the highest concentration of any transferrin in vivo. This chain is Ovotransferrin, found in Anas platyrhynchos (Mallard).